The primary structure comprises 667 residues: UvrABC system protein B (667 aa).

The region spanning 31–414 (KNFEAGAKAQ…EAEQTDIQVD (384 aa)) is the Helicase ATP-binding domain. Residue 44–51 (GATGTGKT) participates in ATP binding. The short motif at 97 to 120 (YYDYYQPEAYVPSSDTYIEKDSSI) is the Beta-hairpin element. The 163-residue stretch at 435–597 (QIDDLVGEIN…ITPKTIIKPI (163 aa)) folds into the Helicase C-terminal domain. Residues 630 to 665 (LEMVERLSEQMRLAAKKLDFEQAATLRDTILELKSE) enclose the UVR domain.

The protein belongs to the UvrB family. In terms of assembly, forms a heterotetramer with UvrA during the search for lesions. Interacts with UvrC in an incision complex.

It localises to the cytoplasm. In terms of biological role, the UvrABC repair system catalyzes the recognition and processing of DNA lesions. A damage recognition complex composed of 2 UvrA and 2 UvrB subunits scans DNA for abnormalities. Upon binding of the UvrA(2)B(2) complex to a putative damaged site, the DNA wraps around one UvrB monomer. DNA wrap is dependent on ATP binding by UvrB and probably causes local melting of the DNA helix, facilitating insertion of UvrB beta-hairpin between the DNA strands. Then UvrB probes one DNA strand for the presence of a lesion. If a lesion is found the UvrA subunits dissociate and the UvrB-DNA preincision complex is formed. This complex is subsequently bound by UvrC and the second UvrB is released. If no lesion is found, the DNA wraps around the other UvrB subunit that will check the other stand for damage. In Latilactobacillus sakei subsp. sakei (strain 23K) (Lactobacillus sakei subsp. sakei), this protein is UvrABC system protein B.